We begin with the raw amino-acid sequence, 415 residues long: MRVVVGIDDTDSHRGGCTTYVGYLLAKEVLRRWGAGAFRDFPRLVRLNPNVPFKTRGNAAVALDLEIPEGDVEELWRLAVETVAAHSRREGKTDPGVAMAAGGVPERAKTLYRMALTQVVSISAAERAGVLTWGGRGKIGAVAAVGAYFPKSTFELIAYRRGDREAIPPDLVRLLEALTYPYTFHNVDRRRVLIEPRGPDPVYYGIRGLTPQHLRYALSLLEAWGYRPAGWVIYRTNQATDAHIELGVFYGDPLPYSFYRARGLVVEARRVAGRHLVGRLDSGLRFVAYRHLGRLASELERCLRCDVVLYGGLKPRRGGLYLYVERAYVLGRYIPARSRCTYCGGSLESLGRGRGWRCRRCGAVFHSAPIRWLYDTAPRRALLPRPGEWRHLLKPPDVDPTIPNFFSPSSAEWIG.

The protein belongs to the TiaS family.

Its subcellular location is the cytoplasm. It catalyses the reaction cytidine(34) in tRNA(Ile2) + agmatine + ATP + H2O = 2-agmatinylcytidine(34) in tRNA(Ile2) + AMP + 2 phosphate + 2 H(+). Functionally, ATP-dependent agmatine transferase that catalyzes the formation of 2-agmatinylcytidine (agm2C) at the wobble position (C34) of tRNA(Ile2), converting the codon specificity from AUG to AUA. In Pyrobaculum neutrophilum (strain DSM 2338 / JCM 9278 / NBRC 100436 / V24Sta) (Thermoproteus neutrophilus), this protein is tRNA(Ile2) 2-agmatinylcytidine synthetase TiaS.